Consider the following 138-residue polypeptide: uncharacterized protein (138 aa).

Helical transmembrane passes span 17-37, 43-63, and 117-137; these read LIVSTIYIVLFFAILNLTVFF, INLILKNSCVVSFVVVWLLVC, and FWWMNFSLYLLGSLISIVVSL.

Its subcellular location is the cell membrane. This is an uncharacterized protein from Mycoplasma pneumoniae (strain ATCC 29342 / M129 / Subtype 1) (Mycoplasmoides pneumoniae).